Consider the following 273-residue polypeptide: uncharacterized protein (273 aa).

This is an uncharacterized protein from Methanocaldococcus jannaschii (strain ATCC 43067 / DSM 2661 / JAL-1 / JCM 10045 / NBRC 100440) (Methanococcus jannaschii).